The primary structure comprises 1195 residues: DNA-directed RNA polymerase subunit Rpo2 (1195 aa).

A compositionally biased stretch (basic and acidic residues) spans 894–909 (LEEGEERLGPQRRRES). The disordered stretch occupies residues 894-914 (LEEGEERLGPQRRRESSVTMR). Positions 1135, 1140, 1155, and 1158 each coordinate Zn(2+).

Belongs to the RNA polymerase beta chain family. In terms of assembly, part of the RNA polymerase complex. Zn(2+) serves as cofactor.

It is found in the cytoplasm. It carries out the reaction RNA(n) + a ribonucleoside 5'-triphosphate = RNA(n+1) + diphosphate. DNA-dependent RNA polymerase (RNAP) catalyzes the transcription of DNA into RNA using the four ribonucleoside triphosphates as substrates. This subunit is involved in DNA promoter recognition. The polypeptide is DNA-directed RNA polymerase subunit Rpo2 (Thermoplasma acidophilum (strain ATCC 25905 / DSM 1728 / JCM 9062 / NBRC 15155 / AMRC-C165)).